The sequence spans 303 residues: NAD(+)--arginine ADP-ribosyltransferase Lart1 (303 aa).

Its subcellular location is the secreted. The enzyme catalyses L-arginyl-[protein] + NAD(+) = N(omega)-(ADP-D-ribosyl)-L-arginyl-[protein] + nicotinamide + H(+). In terms of biological role, ADP-ribosyltransferase that targets a specific class of NAD(+)-dependent glutamate dehydrogenase (GDH) enzymes found in fungi and protists, including many natural hosts of Legionella. Acts by targeting a conserved arginine residue in the NAD(+)-binding pocket of GDH, thereby blocking oxidative deamination of glutamate. Lart1 may target amoeba GDH to prevent a conserved stress response. In vitro, acts on Glud2 from the amoeba Dictyostelium discoideum (DdGluD2) and yeast Gdh2p but does not act on human or Legionella GDH homologs. The polypeptide is NAD(+)--arginine ADP-ribosyltransferase Lart1 (Legionella pneumophila subsp. pneumophila (strain Philadelphia 1 / ATCC 33152 / DSM 7513)).